The following is a 143-amino-acid chain: Ribonuclease VapC33 (143 aa).

Mg(2+) contacts are provided by Asp5 and Asp108.

This sequence belongs to the PINc/VapC protein family. Mg(2+) serves as cofactor.

Toxic component of a type II toxin-antitoxin (TA) system. An RNase. Its toxic effect is neutralized by coexpression with cognate antitoxin VapB33. The chain is Ribonuclease VapC33 from Mycobacterium tuberculosis (strain CDC 1551 / Oshkosh).